The chain runs to 315 residues: 4-hydroxy-3-methylbut-2-enyl diphosphate reductase (315 aa).

Residue Cys-12 coordinates [4Fe-4S] cluster. 2 residues coordinate (2E)-4-hydroxy-3-methylbut-2-enyl diphosphate: His-41 and His-74. Residues His-41 and His-74 each coordinate dimethylallyl diphosphate. His-41 and His-74 together coordinate isopentenyl diphosphate. Cys-96 contacts [4Fe-4S] cluster. Residue His-124 coordinates (2E)-4-hydroxy-3-methylbut-2-enyl diphosphate. A dimethylallyl diphosphate-binding site is contributed by His-124. Residue His-124 participates in isopentenyl diphosphate binding. Glu-126 serves as the catalytic Proton donor. Residue Thr-168 participates in (2E)-4-hydroxy-3-methylbut-2-enyl diphosphate binding. [4Fe-4S] cluster is bound at residue Cys-198. (2E)-4-hydroxy-3-methylbut-2-enyl diphosphate-binding residues include Ser-226, Ser-227, Asn-228, and Ser-270. Dimethylallyl diphosphate contacts are provided by Ser-226, Ser-227, Asn-228, and Ser-270. 4 residues coordinate isopentenyl diphosphate: Ser-226, Ser-227, Asn-228, and Ser-270.

Belongs to the IspH family. [4Fe-4S] cluster is required as a cofactor.

The enzyme catalyses isopentenyl diphosphate + 2 oxidized [2Fe-2S]-[ferredoxin] + H2O = (2E)-4-hydroxy-3-methylbut-2-enyl diphosphate + 2 reduced [2Fe-2S]-[ferredoxin] + 2 H(+). It catalyses the reaction dimethylallyl diphosphate + 2 oxidized [2Fe-2S]-[ferredoxin] + H2O = (2E)-4-hydroxy-3-methylbut-2-enyl diphosphate + 2 reduced [2Fe-2S]-[ferredoxin] + 2 H(+). It functions in the pathway isoprenoid biosynthesis; dimethylallyl diphosphate biosynthesis; dimethylallyl diphosphate from (2E)-4-hydroxy-3-methylbutenyl diphosphate: step 1/1. Its pathway is isoprenoid biosynthesis; isopentenyl diphosphate biosynthesis via DXP pathway; isopentenyl diphosphate from 1-deoxy-D-xylulose 5-phosphate: step 6/6. In terms of biological role, catalyzes the conversion of 1-hydroxy-2-methyl-2-(E)-butenyl 4-diphosphate (HMBPP) into a mixture of isopentenyl diphosphate (IPP) and dimethylallyl diphosphate (DMAPP). Acts in the terminal step of the DOXP/MEP pathway for isoprenoid precursor biosynthesis. This is 4-hydroxy-3-methylbut-2-enyl diphosphate reductase from Pseudomonas fluorescens (strain SBW25).